We begin with the raw amino-acid sequence, 197 residues long: Imidazoleglycerol-phosphate dehydratase (197 aa).

It belongs to the imidazoleglycerol-phosphate dehydratase family.

The protein localises to the cytoplasm. It carries out the reaction D-erythro-1-(imidazol-4-yl)glycerol 3-phosphate = 3-(imidazol-4-yl)-2-oxopropyl phosphate + H2O. The protein operates within amino-acid biosynthesis; L-histidine biosynthesis; L-histidine from 5-phospho-alpha-D-ribose 1-diphosphate: step 6/9. This Chromohalobacter salexigens (strain ATCC BAA-138 / DSM 3043 / CIP 106854 / NCIMB 13768 / 1H11) protein is Imidazoleglycerol-phosphate dehydratase.